The primary structure comprises 413 residues: Phosphopentomutase (413 aa).

Positions 11, 306, 311, 347, 348, and 359 each coordinate Mn(2+).

The protein belongs to the phosphopentomutase family. The cofactor is Mn(2+).

Its subcellular location is the cytoplasm. It carries out the reaction 2-deoxy-alpha-D-ribose 1-phosphate = 2-deoxy-D-ribose 5-phosphate. The enzyme catalyses alpha-D-ribose 1-phosphate = D-ribose 5-phosphate. The protein operates within carbohydrate degradation; 2-deoxy-D-ribose 1-phosphate degradation; D-glyceraldehyde 3-phosphate and acetaldehyde from 2-deoxy-alpha-D-ribose 1-phosphate: step 1/2. Isomerase that catalyzes the conversion of deoxy-ribose 1-phosphate (dRib-1-P) and ribose 1-phosphate (Rib-1-P) to deoxy-ribose 5-phosphate (dRib-5-P) and ribose 5-phosphate (Rib-5-P), respectively. The polypeptide is Phosphopentomutase (Helicobacter pylori (strain HPAG1)).